We begin with the raw amino-acid sequence, 170 residues long: NAD(P)H-quinone oxidoreductase subunit I, chloroplastic (170 aa).

4Fe-4S ferredoxin-type domains are found at residues 55 to 84 and 95 to 124; these read GRIHFEFDKCIACEVCVRACPIDLPVVDWK and LNYSIDFGICIFCGNCVEYCPTNCLSMTEE. [4Fe-4S] cluster-binding residues include cysteine 64, cysteine 67, cysteine 70, cysteine 74, cysteine 104, cysteine 107, cysteine 110, and cysteine 114.

The protein belongs to the complex I 23 kDa subunit family. In terms of assembly, NDH is composed of at least 16 different subunits, 5 of which are encoded in the nucleus. [4Fe-4S] cluster serves as cofactor.

The protein localises to the plastid. The protein resides in the chloroplast thylakoid membrane. It carries out the reaction a plastoquinone + NADH + (n+1) H(+)(in) = a plastoquinol + NAD(+) + n H(+)(out). The enzyme catalyses a plastoquinone + NADPH + (n+1) H(+)(in) = a plastoquinol + NADP(+) + n H(+)(out). In terms of biological role, NDH shuttles electrons from NAD(P)H:plastoquinone, via FMN and iron-sulfur (Fe-S) centers, to quinones in the photosynthetic chain and possibly in a chloroplast respiratory chain. The immediate electron acceptor for the enzyme in this species is believed to be plastoquinone. Couples the redox reaction to proton translocation, and thus conserves the redox energy in a proton gradient. This is NAD(P)H-quinone oxidoreductase subunit I, chloroplastic from Spinacia oleracea (Spinach).